The chain runs to 291 residues: Kidney mitochondrial carrier protein 1 (291 aa).

Solcar repeat units follow at residues 7 to 96 (KPFI…LKRL), 104 to 189 (ETLV…TKKH), and 198 to 289 (DTVY…LKKL). The next 6 membrane-spanning stretches (helical) occupy residues 9–26 (FIYG…TFPI), 71–89 (GIAP…KIGT), 106–124 (LVLN…SCIA), 164–183 (GVSL…LPVY), 204–224 (FLSS…VDVV), and 264–283 (GFWP…FITY).

This sequence belongs to the mitochondrial carrier (TC 2.A.29) family.

It localises to the mitochondrion inner membrane. It carries out the reaction sulfite(in) + sulfate(out) = sulfite(out) + sulfate(in). The enzyme catalyses thiosulfate(in) + sulfate(out) = thiosulfate(out) + sulfate(in). The catalysed reaction is sulfate(out) + phosphate(in) = sulfate(in) + phosphate(out). It catalyses the reaction oxalate(in) + sulfate(out) = oxalate(out) + sulfate(in). It carries out the reaction malonate(in) + sulfate(out) = malonate(out) + sulfate(in). The enzyme catalyses maleate(in) + sulfate(out) = maleate(out) + sulfate(in). The catalysed reaction is (S)-malate(in) + sulfate(out) = (S)-malate(out) + sulfate(in). It catalyses the reaction (3S)-citramalate(in) + sulfate(out) = (3S)-citramalate(out) + sulfate(in). It carries out the reaction (3R)-citramalate(in) + sulfate(out) = (3R)-citramalate(out) + sulfate(in). The enzyme catalyses sulfate(out) + succinate(in) = sulfate(in) + succinate(out). The catalysed reaction is (S,S)-tartrate(in) + sulfate(out) = (S,S)-tartrate(out) + sulfate(in). It catalyses the reaction (2R,3R)-tartrate(in) + sulfate(out) = (2R,3R)-tartrate(out) + sulfate(in). It carries out the reaction D-aspartate(in) + sulfate(out) = D-aspartate(out) + sulfate(in). The enzyme catalyses L-aspartate(in) + sulfate(out) = L-aspartate(out) + sulfate(in). The catalysed reaction is sulfate(in) = sulfate(out). It catalyses the reaction phosphate(in) = phosphate(out). It carries out the reaction (S)-malate(out) = (S)-malate(in). Functionally, probable transporter. In terms of biological role, antiporter that transports inorganic anions (sulfate, sulfite, thiosulfate and phosphate) and, to a lesser extent, a variety of dicarboxylates (e.g. malonate, malate and citramalate) and, even more so, aspartate. The sulfate/sulfate exchange is much higher than the phosphate/phosphate and malate/malate exchanges. The transport affinities is higher for sulfate and thiosulfate than for any other substrate. May catalyze the export of sulfite and thiosulfate (the hydrogen sulfide degradation products) from the mitochondria, thereby modulating the level of the hydrogen sulfide. Also may mediate a very low unidirectional transport of sulfate, phosphate and (S)-malate. This chain is Kidney mitochondrial carrier protein 1, found in Xenopus laevis (African clawed frog).